A 445-amino-acid polypeptide reads, in one-letter code: Argininosuccinate synthase (445 aa).

Residues 17-25 (AFSGGLDTS) and Ala-43 each bind ATP. Tyr-99 is a binding site for L-citrulline. Gly-129 and Thr-131 together coordinate ATP. Residues Thr-131, Asn-135, and Asp-136 each coordinate L-aspartate. Asn-135 lines the L-citrulline pocket. Asp-136 contributes to the ATP binding site. Arg-139 and Ser-192 together coordinate L-citrulline. Asp-194 serves as a coordination point for ATP. Thr-201, Glu-203, and Glu-280 together coordinate L-citrulline.

It belongs to the argininosuccinate synthase family. Type 2 subfamily. As to quaternary structure, homotetramer.

The protein localises to the cytoplasm. The enzyme catalyses L-citrulline + L-aspartate + ATP = 2-(N(omega)-L-arginino)succinate + AMP + diphosphate + H(+). It functions in the pathway amino-acid biosynthesis; L-arginine biosynthesis; L-arginine from L-ornithine and carbamoyl phosphate: step 2/3. The protein is Argininosuccinate synthase of Rhodopseudomonas palustris (strain BisB5).